We begin with the raw amino-acid sequence, 138 residues long: 16 kDa phloem protein 2 (138 aa).

The C2 domain occupies 1–108; it reads MGMGMMEVHL…LAEGVRKGWS (108 aa). 5 residues coordinate Ca(2+): aspartate 20, aspartate 27, aspartate 78, aspartate 80, and aspartate 86.

The cofactor is Ca(2+). As to expression, sieve elements of leaves, stems, roots and flowers.

Binds to both sense and antisense RNA. Interacts with mesophyll plasmodesmata to mediate its own cell-to-cell transport and potentiate RNA trafficking. In Cucurbita maxima (Pumpkin), this protein is 16 kDa phloem protein 2 (PP16-2).